We begin with the raw amino-acid sequence, 365 residues long: Peptide chain release factor 2 (365 aa).

Glutamine 252 is subject to N5-methylglutamine.

Belongs to the prokaryotic/mitochondrial release factor family. Methylated by PrmC. Methylation increases the termination efficiency of RF2.

The protein resides in the cytoplasm. Peptide chain release factor 2 directs the termination of translation in response to the peptide chain termination codons UGA and UAA. This Shewanella woodyi (strain ATCC 51908 / MS32) protein is Peptide chain release factor 2.